Here is a 509-residue protein sequence, read N- to C-terminus: Protein OS-9 homolog (509 aa).

Positions 1 to 23 (MRRQSRIVASLLVLACASSGAFA) are cleaved as a signal peptide. Polar residues predominate over residues 64-74 (SPDLNDISEQT). The segment at 64 to 91 (SPDLNDISEQTPLKDESEESIRDGSSGE) is disordered. Residues 75-91 (PLKDESEESIRDGSSGE) are compositionally biased toward basic and acidic residues. N120 is a glycosylation site (N-linked (GlcNAc...) asparagine). Positions 151 to 291 (GKCLYYISGW…LIYTPRLCND (141 aa)) constitute an MRH domain. The cysteines at positions 153 and 166 are disulfide-linked. A mannooligosaccharide derivative-binding residues include W160, W161, Q173, D246, R252, E273, and Y279. Disulfide bonds link C245-C277 and C260-C289. The disordered stretch occupies residues 433 to 509 (GVVDTDEDEE…GSEEIFKDEL (77 aa)). Over residues 436–451 (DTDEDEEDGYENEEGE) the composition is skewed to acidic residues. Over residues 452–461 (TDKREQRENT) the composition is skewed to basic and acidic residues. Acidic residues predominate over residues 489 to 502 (RSEDGEDPDVDGSE). Positions 506–509 (KDEL) match the Prevents secretion from ER motif.

This sequence belongs to the OS-9 family. In terms of assembly, interacts with missfolded ER lumenal proteins.

It is found in the endoplasmic reticulum membrane. Functionally, lectin involved in the quality control of the secretory pathway. As a member of the endoplasmic reticulum-associated degradation lumenal (ERAD-L) surveillance system, targets misfolded endoplasmic reticulum lumenal glycoproteins for degradation. This chain is Protein OS-9 homolog (yos9), found in Emericella nidulans (strain FGSC A4 / ATCC 38163 / CBS 112.46 / NRRL 194 / M139) (Aspergillus nidulans).